The primary structure comprises 343 residues: Holliday junction branch migration complex subunit RuvB (343 aa).

The interval 1 to 181 is large ATPase domain (RuvB-L); sequence MDRIIDSAAT…FGIVQRLEFY (181 aa). Residues I20, R21, G62, K65, T66, T67, 128 to 130, R171, Y181, and R218 each bind ATP; that span reads EDF. Mg(2+) is bound at residue T66. The interval 182-252 is small ATPAse domain (RuvB-S); sequence SPEDLARIVR…VAQAAMQMLK (71 aa). The head domain (RuvB-H) stretch occupies residues 255-343; it reads QGGFDELDRR…SAFTDPEDLF (89 aa). 3 residues coordinate DNA: R291, R310, and R315.

The protein belongs to the RuvB family. In terms of assembly, homohexamer. Forms an RuvA(8)-RuvB(12)-Holliday junction (HJ) complex. HJ DNA is sandwiched between 2 RuvA tetramers; dsDNA enters through RuvA and exits via RuvB. An RuvB hexamer assembles on each DNA strand where it exits the tetramer. Each RuvB hexamer is contacted by two RuvA subunits (via domain III) on 2 adjacent RuvB subunits; this complex drives branch migration. In the full resolvosome a probable DNA-RuvA(4)-RuvB(12)-RuvC(2) complex forms which resolves the HJ.

It localises to the cytoplasm. It catalyses the reaction ATP + H2O = ADP + phosphate + H(+). Functionally, the RuvA-RuvB-RuvC complex processes Holliday junction (HJ) DNA during genetic recombination and DNA repair, while the RuvA-RuvB complex plays an important role in the rescue of blocked DNA replication forks via replication fork reversal (RFR). RuvA specifically binds to HJ cruciform DNA, conferring on it an open structure. The RuvB hexamer acts as an ATP-dependent pump, pulling dsDNA into and through the RuvAB complex. RuvB forms 2 homohexamers on either side of HJ DNA bound by 1 or 2 RuvA tetramers; 4 subunits per hexamer contact DNA at a time. Coordinated motions by a converter formed by DNA-disengaged RuvB subunits stimulates ATP hydrolysis and nucleotide exchange. Immobilization of the converter enables RuvB to convert the ATP-contained energy into a lever motion, pulling 2 nucleotides of DNA out of the RuvA tetramer per ATP hydrolyzed, thus driving DNA branch migration. The RuvB motors rotate together with the DNA substrate, which together with the progressing nucleotide cycle form the mechanistic basis for DNA recombination by continuous HJ branch migration. Branch migration allows RuvC to scan DNA until it finds its consensus sequence, where it cleaves and resolves cruciform DNA. The protein is Holliday junction branch migration complex subunit RuvB of Xylella fastidiosa (strain Temecula1 / ATCC 700964).